Here is a 143-residue protein sequence, read N- to C-terminus: ATP synthase subunit b' (143 aa).

A helical membrane pass occupies residues 6–26 (ATLPFMALQFLLLAAVLNAIF).

It belongs to the ATPase B chain family. In terms of assembly, F-type ATPases have 2 components, F(1) - the catalytic core - and F(0) - the membrane proton channel. F(1) has five subunits: alpha(3), beta(3), gamma(1), delta(1), epsilon(1). F(0) has four main subunits: a(1), b(1), b'(1) and c(10-14). The alpha and beta chains form an alternating ring which encloses part of the gamma chain. F(1) is attached to F(0) by a central stalk formed by the gamma and epsilon chains, while a peripheral stalk is formed by the delta, b and b' chains.

The protein resides in the cellular thylakoid membrane. Functionally, f(1)F(0) ATP synthase produces ATP from ADP in the presence of a proton or sodium gradient. F-type ATPases consist of two structural domains, F(1) containing the extramembraneous catalytic core and F(0) containing the membrane proton channel, linked together by a central stalk and a peripheral stalk. During catalysis, ATP synthesis in the catalytic domain of F(1) is coupled via a rotary mechanism of the central stalk subunits to proton translocation. Its function is as follows. Component of the F(0) channel, it forms part of the peripheral stalk, linking F(1) to F(0). The b'-subunit is a diverged and duplicated form of b found in plants and photosynthetic bacteria. This is ATP synthase subunit b' from Nostoc punctiforme (strain ATCC 29133 / PCC 73102).